The chain runs to 207 residues: Ribosomal RNA small subunit methyltransferase G (207 aa).

S-adenosyl-L-methionine is bound by residues Gly73, Leu78, 124-125, and Arg139; that span reads VE.

It belongs to the methyltransferase superfamily. RNA methyltransferase RsmG family.

The protein localises to the cytoplasm. It catalyses the reaction guanosine(527) in 16S rRNA + S-adenosyl-L-methionine = N(7)-methylguanosine(527) in 16S rRNA + S-adenosyl-L-homocysteine. Its function is as follows. Specifically methylates the N7 position of guanine in position 527 of 16S rRNA. The polypeptide is Ribosomal RNA small subunit methyltransferase G (Cronobacter sakazakii (strain ATCC BAA-894) (Enterobacter sakazakii)).